Reading from the N-terminus, the 1174-residue chain is Nucleolar complex protein 1 (1174 aa).

Disordered stretches follow at residues 1 to 20, 29 to 237, 715 to 742, 893 to 922, 944 to 1085, and 1116 to 1174; these read MPAA…NKKI, VVKQ…EESQ, YEDV…VKSS, AQNK…LKEG, GVDE…GGRS, and VKGQ…KRKH. The span at 33–63 shows a compositional bias: basic and acidic residues; sequence NKKEHPQRPKFEGKEQVKKPQKIKFGEDGKA. Over residues 95–104 the composition is skewed to polar residues; that stretch reads ASKSFNQNHK. Composition is skewed to basic and acidic residues over residues 113-122 and 176-200; these read KFGEDREAVH and KFGD…EDGA. Composition is skewed to acidic residues over residues 207–216 and 715–724; these read SDGDSDEELG and YEDVKDEADD. Composition is skewed to basic and acidic residues over residues 725-739 and 897-906; these read TKDS…DNDV and KQKEIKKDAA. Composition is skewed to acidic residues over residues 907-916, 945-954, 981-1038, and 1048-1065; these read EEGDDGEAGE, VDEEQDEEEL, AEDE…DEGS, and DSSD…DDED. Over residues 1127–1143 the composition is skewed to basic and acidic residues; that stretch reads NKDKSSDKQLKWEENRR. The segment covering 1156–1166 has biased composition (low complexity); that stretch reads GKPAAKGGRPQ.

It belongs to the CBF/MAK21 family.

It localises to the nucleus. The protein localises to the nucleolus. Involved in rRNA processing and ribosome maturation. May also act as a transcription factor. The protein is Nucleolar complex protein 1 of Drosophila melanogaster (Fruit fly).